A 393-amino-acid chain; its full sequence is Phosphoglycerate kinase (393 aa).

Substrate contacts are provided by residues 22–24 (DFN), R37, 60–63 (HLGR), R119, and R152. ATP is bound by residues K202, G293, E324, and 350 to 353 (GGDS).

It belongs to the phosphoglycerate kinase family. As to quaternary structure, monomer.

Its subcellular location is the cytoplasm. It catalyses the reaction (2R)-3-phosphoglycerate + ATP = (2R)-3-phospho-glyceroyl phosphate + ADP. Its pathway is carbohydrate degradation; glycolysis; pyruvate from D-glyceraldehyde 3-phosphate: step 2/5. The polypeptide is Phosphoglycerate kinase (Borreliella afzelii (strain PKo) (Borrelia afzelii)).